The primary structure comprises 147 residues: Epididymal secretory protein E3-beta (147 aa).

A signal peptide spans 1 to 25 (MASSLKIWGTLLALLCILCTLLVQS).

In terms of tissue distribution, epididymis.

It localises to the secreted. Functionally, possible function in sperm maturation. The sequence is that of Epididymal secretory protein E3-beta (EDDM3B) from Homo sapiens (Human).